A 138-amino-acid polypeptide reads, in one-letter code: Small ribosomal subunit protein uS9 (138 aa).

This sequence belongs to the universal ribosomal protein uS9 family.

The protein is Small ribosomal subunit protein uS9 (rps9) of Sulfolobus acidocaldarius (strain ATCC 33909 / DSM 639 / JCM 8929 / NBRC 15157 / NCIMB 11770).